Reading from the N-terminus, the 137-residue chain is Ribosome-binding factor A (137 aa).

Belongs to the RbfA family. As to quaternary structure, monomer. Binds 30S ribosomal subunits, but not 50S ribosomal subunits or 70S ribosomes.

The protein resides in the cytoplasm. One of several proteins that assist in the late maturation steps of the functional core of the 30S ribosomal subunit. Associates with free 30S ribosomal subunits (but not with 30S subunits that are part of 70S ribosomes or polysomes). Required for efficient processing of 16S rRNA. May interact with the 5'-terminal helix region of 16S rRNA. The polypeptide is Ribosome-binding factor A (Allorhizobium ampelinum (strain ATCC BAA-846 / DSM 112012 / S4) (Agrobacterium vitis (strain S4))).